We begin with the raw amino-acid sequence, 378 residues long: Dihydroorotate dehydrogenase (quinone) (378 aa).

FMN contacts are provided by residues 77 to 81 and Thr-101; that span reads AGFDK. Lys-81 contributes to the substrate binding site. 126–130 is a binding site for substrate; the sequence is NRMGF. Asn-158 and Asn-191 together coordinate FMN. Asn-191 serves as a coordination point for substrate. Ser-194 (nucleophile) is an active-site residue. Asn-196 contributes to the substrate binding site. Positions 229 and 257 each coordinate FMN. Substrate is bound at residue 258 to 259; it reads NT. FMN is bound by residues Gly-287, Gly-316, and 337-338; that span reads YT.

It belongs to the dihydroorotate dehydrogenase family. Type 2 subfamily. In terms of assembly, monomer. It depends on FMN as a cofactor.

The protein localises to the cell membrane. The enzyme catalyses (S)-dihydroorotate + a quinone = orotate + a quinol. The protein operates within pyrimidine metabolism; UMP biosynthesis via de novo pathway; orotate from (S)-dihydroorotate (quinone route): step 1/1. Its function is as follows. Catalyzes the conversion of dihydroorotate to orotate with quinone as electron acceptor. This chain is Dihydroorotate dehydrogenase (quinone), found in Synechococcus sp. (strain ATCC 27144 / PCC 6301 / SAUG 1402/1) (Anacystis nidulans).